The sequence spans 1068 residues: Cytospin-B (1068 aa).

Positions 1-221 (MRSAAKPWNP…VDGTSVSPGD (221 aa)) are disordered. Arginine 2 carries N-myristoyl glycine lipidation. The span at 29–40 (SSGMKSSKSSTS) shows a compositional bias: low complexity. Phosphoserine occurs at positions 38 and 55. Threonine 78 carries the phosphothreonine modification. 5 positions are modified to phosphoserine: serine 112, serine 131, serine 134, serine 137, and serine 138. Over residues 126 to 144 (SNPRKSVSSPTSSNTPTPT) the composition is skewed to low complexity. Threonine 142 bears the Phosphothreonine mark. A compositionally biased stretch (basic and acidic residues) spans 154–200 (PKQENEGGEKAALESQVRELLAEAKAKDSEINRLRSELKKYKEKRTL). A phosphoserine mark is found at serine 218 and serine 241. 3 stretches are compositionally biased toward polar residues: residues 261-295 (PNSEGAASHTGDSSCPTSITQESSFGSPTGNQMSS), 309-323 (LRTSGSSSSDVTKAS), and 337-367 (ETPSRPLSSTSNPFKSSKCSTAGSSPNSVSE). Residues 261–367 (PNSEGAASHT…AGSSPNSVSE (107 aa)) are disordered. A phosphoserine mark is found at serine 361, serine 366, serine 369, and serine 425. Residues 579–773 (EVQEMLKVAR…QKELGDVQGH (195 aa)) are a coiled coil. The interval 777–796 (VTSRAAPPPVDEEPESSEVD) is disordered. A phosphoserine mark is found at serine 847 and serine 863. Disordered regions lie at residues 859–885 (AAAVSPMQRHSTYSSVRPASRGVTQRL) and 898–922 (GRTETLKPDPHLRKSPSLESLSRPP). The segment covering 866–875 (QRHSTYSSVR) has biased composition (polar residues). Over residues 898–909 (GRTETLKPDPHL) the composition is skewed to basic and acidic residues. Serine 912 and serine 914 each carry phosphoserine. Over residues 912-922 (SPSLESLSRPP) the composition is skewed to low complexity. A Calponin-homology (CH) domain is found at 962–1067 (GSKRNALLKW…YVAQIYKYFE (106 aa)).

This sequence belongs to the cytospin-A family. As to expression, highly expressed in testis. Barely detectable in other tissues. Also highly expressed in some cancer cell lines.

The protein localises to the nucleus. Its subcellular location is the membrane. The protein is Cytospin-B (SPECC1) of Homo sapiens (Human).